The primary structure comprises 102 residues: Biotrophy-associated secreted protein 2 (102 aa).

The signal sequence occupies residues 1-19 (MVRVSTFAAILAMALSVTA). N-linked (GlcNAc...) asparagine glycosylation occurs at asparagine 46.

The protein localises to the secreted. Functionally, secreted effector involved in biotrophic colonization of plant cells. In Pyricularia oryzae (strain 70-15 / ATCC MYA-4617 / FGSC 8958) (Rice blast fungus), this protein is Biotrophy-associated secreted protein 2.